The sequence spans 347 residues: Probable dual-specificity RNA methyltransferase RlmN (347 aa).

Glu90 acts as the Proton acceptor in catalysis. The 231-residue stretch at 96-326 (YKHGNSICIS…VTVRREMGSD (231 aa)) folds into the Radical SAM core domain. An intrachain disulfide couples Cys103 to Cys331. [4Fe-4S] cluster contacts are provided by Cys110, Cys114, and Cys117. S-adenosyl-L-methionine is bound by residues 157–158 (GE), Ser189, 212–214 (SLH), and Asn288. Cys331 serves as the catalytic S-methylcysteine intermediate.

This sequence belongs to the radical SAM superfamily. RlmN family. [4Fe-4S] cluster serves as cofactor.

Its subcellular location is the cytoplasm. It carries out the reaction adenosine(2503) in 23S rRNA + 2 reduced [2Fe-2S]-[ferredoxin] + 2 S-adenosyl-L-methionine = 2-methyladenosine(2503) in 23S rRNA + 5'-deoxyadenosine + L-methionine + 2 oxidized [2Fe-2S]-[ferredoxin] + S-adenosyl-L-homocysteine. It catalyses the reaction adenosine(37) in tRNA + 2 reduced [2Fe-2S]-[ferredoxin] + 2 S-adenosyl-L-methionine = 2-methyladenosine(37) in tRNA + 5'-deoxyadenosine + L-methionine + 2 oxidized [2Fe-2S]-[ferredoxin] + S-adenosyl-L-homocysteine. Functionally, specifically methylates position 2 of adenine 2503 in 23S rRNA and position 2 of adenine 37 in tRNAs. This is Probable dual-specificity RNA methyltransferase RlmN from Clostridium botulinum (strain Alaska E43 / Type E3).